The primary structure comprises 117 residues: Probable non-functional immunoglobulin heavy variable 3-16 (117 aa).

An N-terminal signal peptide occupies residues 1-19 (MEFGLSWVFLAGILKGVQC). The tract at residues 20 to 44 (EVQLVESGGGLVQPGGSLRLSCAAS) is framework-1. The 97-residue stretch at 21 to 117 (VQLVESGGGL…EDMAVYYCVR (97 aa)) folds into the Ig-like domain. A disulfide bridge links C41 with C115. Positions 45 to 52 (GFTFSNSD) are complementarity-determining-1. Positions 53–69 (MNWARKAPGKGLEWVSG) are framework-2. Positions 70 to 77 (VSWNGSRT) are complementarity-determining-2. An N-linked (GlcNAc...) asparagine glycan is attached at N73. The framework-3 stretch occupies residues 78-115 (HYVDSVKRRFIISRDNSRNSLYLQKNRRRAEDMAVYYC). The interval 116 to 117 (VR) is complementarity-determining-3.

Immunoglobulins are composed of two identical heavy chains and two identical light chains; disulfide-linked.

It localises to the secreted. Its subcellular location is the cell membrane. Probable non-functional open reading frame (ORF) of V region of the variable domain of immunoglobulin heavy chains. Non-functional ORF generally cannot participate in the synthesis of a productive immunoglobulin chain due to altered V-(D)-J or switch recombination and/or splicing site (at mRNA level) and/or conserved amino acid change (protein level). Immunoglobulins, also known as antibodies, are membrane-bound or secreted glycoproteins produced by B lymphocytes. In the recognition phase of humoral immunity, the membrane-bound immunoglobulins serve as receptors which, upon binding of a specific antigen, trigger the clonal expansion and differentiation of B lymphocytes into immunoglobulins-secreting plasma cells. Secreted immunoglobulins mediate the effector phase of humoral immunity, which results in the elimination of bound antigens. The antigen binding site is formed by the variable domain of one heavy chain, together with that of its associated light chain. Thus, each immunoglobulin has two antigen binding sites with remarkable affinity for a particular antigen. The variable domains are assembled by a process called V-(D)-J rearrangement and can then be subjected to somatic hypermutations which, after exposure to antigen and selection, allow affinity maturation for a particular antigen. In Homo sapiens (Human), this protein is Probable non-functional immunoglobulin heavy variable 3-16.